The primary structure comprises 431 residues: Putative transcription factor R429 (431 aa).

Positions 28-95 form a coiled coil; it reads NKFENMSKAL…SIENCSESLD (68 aa). The disordered stretch occupies residues 142–187; the sequence is SQQENSSESNNDIVKNGTGGSTSKRKKIQPSNRCSGSKTGKVTETK. The segment covering 143–152 has biased composition (low complexity); sequence QQENSSESNN. The span at 170–181 shows a compositional bias: polar residues; sequence QPSNRCSGSKTG. A zinc finger spans residues 218 to 241; the sequence is CSVPDCDGEKILNQNDGYMVCKKC.

The protein belongs to the nucleo-cytoplasmic large DNA viruses (NCLDVs) VLTF-3 family.

Putative transcription factor. This chain is Putative transcription factor R429, found in Acanthamoeba polyphaga (Amoeba).